A 273-amino-acid chain; its full sequence is MSDMHSLLIAAILGVVEGLTEFLPVSSTGHMIIVGHLLGFEGDTAKTFEVVIQLGSILAVVVMFWRRLFGLIGIHFGRPLQHEGESKGRLTLIHILLGMIPAVVLGLLFHDTIKSLFNPINVMYALVVGGLLLIAAECLKPKEPRAPGLDDMTYRQAFMIGCFQCLALWPGFSRSGATISGGMLMGVSRYAASEFSFLLAVPMMMGATALDLYKSWGFLTTGDIPMFAVGFITAFVVALIAIKTFLQLIKRISFIPFAIYRFIVAAAVYVVFF.

The next 7 helical transmembrane spans lie at serine 6–serine 26, alanine 45–tryptophan 65, leucine 90–histidine 110, leucine 116–alanine 136, tyrosine 190–leucine 210, glycine 222–isoleucine 242, and isoleucine 252–phenylalanine 272.

Belongs to the UppP family.

The protein resides in the cell inner membrane. The catalysed reaction is di-trans,octa-cis-undecaprenyl diphosphate + H2O = di-trans,octa-cis-undecaprenyl phosphate + phosphate + H(+). Its function is as follows. Catalyzes the dephosphorylation of undecaprenyl diphosphate (UPP). Confers resistance to bacitracin. This Escherichia coli O139:H28 (strain E24377A / ETEC) protein is Undecaprenyl-diphosphatase.